The following is a 128-amino-acid chain: MGLMWGLFSVIIASVAQLSLGFAASHLPPMTHLWDFIATLLAFGLDARILLLGLLGYLLSVFCWYKTLHKLALSKAYALLSMSYVLVWIASMVLPGWGGTFSLKALLGVACIMSGLMLIFLPTTKQRY.

At methionine 1 to glycine 2 the chain is on the cytoplasmic side. The chain crosses the membrane as a helical span at residues leucine 3–alanine 23. The Periplasmic segment spans residues alanine 24 to aspartate 35. The helical transmembrane segment at phenylalanine 36–glycine 56 threads the bilayer. The Cytoplasmic segment spans residues tyrosine 57 to tyrosine 77. A helical transmembrane segment spans residues alanine 78–glycine 98. Over glycine 99–threonine 100 the chain is Periplasmic. A helical membrane pass occupies residues phenylalanine 101–leucine 121. The Cytoplasmic portion of the chain corresponds to proline 122–tyrosine 128.

This sequence belongs to the ArnF family. Heterodimer of ArnE and ArnF.

It localises to the cell inner membrane. Its pathway is bacterial outer membrane biogenesis; lipopolysaccharide biosynthesis. In terms of biological role, translocates 4-amino-4-deoxy-L-arabinose-phosphoundecaprenol (alpha-L-Ara4N-phosphoundecaprenol) from the cytoplasmic to the periplasmic side of the inner membrane. This chain is Probable 4-amino-4-deoxy-L-arabinose-phosphoundecaprenol flippase subunit ArnF, found in Shigella dysenteriae serotype 1 (strain Sd197).